The chain runs to 326 residues: Meso-diaminopimelate D-dehydrogenase (326 aa).

NADP(+) contacts are provided by residues 11-14 (YGNL), 35-37 (TRR), 69-72 (CGGS), 92-94 (SFD), and 121-125 (VGWDP). Substrate is bound by residues aspartate 94, aspartate 124, tryptophan 148, 154–155 (QG), threonine 173, arginine 199, histidine 249, and asparagine 276.

It belongs to the diaminopimelate dehydrogenase family. In terms of assembly, homodimer.

The catalysed reaction is meso-2,6-diaminopimelate + NADP(+) + H2O = (S)-2-amino-6-oxoheptanedioate + NH4(+) + NADPH + H(+). Its pathway is amino-acid biosynthesis; L-lysine biosynthesis via DAP pathway; DL-2,6-diaminopimelate from (S)-tetrahydrodipicolinate: step 1/1. The enzyme is completely inhibited by p-chloromercuribenzoate and HgCl(2) in vitro. Thioglycollate, L-cysteine and Cu(2+) also strongly inhibit the enzyme. Its function is as follows. Catalyzes the reversible NADPH-dependent reductive amination of L-2-amino-6-oxopimelate, the acyclic form of L-tetrahydrodipicolinate, to generate the meso compound, D,L-2,6-diaminopimelate. Probably plays a role in lysine biosynthesis. Is highly specific for meso-2,6-diaminopimelate as the electron donor, since the following amino acids are inert for the oxidative deamination reaction: DL-2-aminopimelate, D-glutamate, L-glutamate, D-aspartate, L-aspartate, D-alanine, L-alanine, D-valine, L-valine, D-lysine, L-lysine, D-phenylalanine, L-phenylalanine, D-leucine, L-leucine, D-threonine, L-threonine, D-serine, L-serine, D-tryptophan, L-tryptophan, D-cysteine, L-cysteine, D-histidine, L-histidine, D-methionine, D-arginine, D-proline, D-asparagine, D-glutamine, D-isoleucine and D-ornithine. Moreover, exclusively uses NADP as the electron acceptor for the oxidative deamination of meso-DAP; NAD is inert. This chain is Meso-diaminopimelate D-dehydrogenase (ddh), found in Ureibacillus thermosphaericus.